The following is a 449-amino-acid chain: Phosphoglucosamine mutase (449 aa).

Residue Ser-100 is the Phosphoserine intermediate of the active site. Mg(2+) contacts are provided by Ser-100, Asp-241, Asp-243, and Asp-245. At Ser-100 the chain carries Phosphoserine.

This sequence belongs to the phosphohexose mutase family. Requires Mg(2+) as cofactor. Activated by phosphorylation.

The catalysed reaction is alpha-D-glucosamine 1-phosphate = D-glucosamine 6-phosphate. Its function is as follows. Catalyzes the conversion of glucosamine-6-phosphate to glucosamine-1-phosphate. This chain is Phosphoglucosamine mutase, found in Clostridium botulinum (strain Loch Maree / Type A3).